The following is a 106-amino-acid chain: Putative double-stranded DNA mimic protein VV1_3059 (106 aa).

The protein belongs to the putative dsDNA mimic protein family.

Functionally, may act as a double-stranded DNA (dsDNA) mimic. Probably regulates the activity of a dsDNA-binding protein. The polypeptide is Putative double-stranded DNA mimic protein VV1_3059 (Vibrio vulnificus (strain CMCP6)).